A 341-amino-acid chain; its full sequence is MTLQFRADVDLRPYNTFGMAVRAAHFCQLDDAADLPALLAHPLYRQGPVLWLGGGSNLLLTRDYPGLVVKVALAGIRLLREDGDDMIVEAAAGENWHGFVQHALAQGWYGLENLSLIPGTVGASPVQNIGAYGVEVKDRLLEVVCAQLDRNGEAATLSNAECRFGYRDSVFKHEAAGRLLVTAVRFRLSRRAELRTGYGDIQQQLQADGVDRPTPLDVSRAVVAIRQSKLPDPAVLGNAGSFFKNPVVPAEQAAALLERHPQLPRYPAADGKVKLAAGWLIDQCGLKGYRDGDAGVHDRQALVLVNHGRATGEQMRALARKVQQTVKEKFGVELEPEPLIL.

Residues 19 to 191 (MAVRAAHFCQ…TAVRFRLSRR (173 aa)) enclose the FAD-binding PCMH-type domain. Arg-167 is an active-site residue. The active-site Proton donor is Ser-241. Residue Glu-337 is part of the active site.

It belongs to the MurB family. FAD is required as a cofactor.

The protein localises to the cytoplasm. The catalysed reaction is UDP-N-acetyl-alpha-D-muramate + NADP(+) = UDP-N-acetyl-3-O-(1-carboxyvinyl)-alpha-D-glucosamine + NADPH + H(+). The protein operates within cell wall biogenesis; peptidoglycan biosynthesis. Functionally, cell wall formation. This Chromobacterium violaceum (strain ATCC 12472 / DSM 30191 / JCM 1249 / CCUG 213 / NBRC 12614 / NCIMB 9131 / NCTC 9757 / MK) protein is UDP-N-acetylenolpyruvoylglucosamine reductase.